The chain runs to 261 residues: uncharacterized protein (261 aa).

This sequence belongs to the BtpA family.

This is an uncharacterized protein from Thermococcus kodakarensis (strain ATCC BAA-918 / JCM 12380 / KOD1) (Pyrococcus kodakaraensis (strain KOD1)).